A 250-amino-acid polypeptide reads, in one-letter code: 2,3-bisphosphoglycerate-dependent phosphoglycerate mutase (250 aa).

Residues 8 to 15 (RHGESTWN), 21 to 22 (TG), Arg-60, 87 to 90 (ERHY), Lys-98, and 114 to 115 (RR) each bind substrate. His-9 (tele-phosphohistidine intermediate) is an active-site residue. The Proton donor/acceptor role is filled by Glu-87. Residues 116–135 (SYDTPPPPLAANDPRSERSD) form a disordered region. 183-184 (GN) is a substrate binding site.

Belongs to the phosphoglycerate mutase family. BPG-dependent PGAM subfamily. In terms of assembly, homodimer.

The enzyme catalyses (2R)-2-phosphoglycerate = (2R)-3-phosphoglycerate. The protein operates within carbohydrate degradation; glycolysis; pyruvate from D-glyceraldehyde 3-phosphate: step 3/5. Catalyzes the interconversion of 2-phosphoglycerate and 3-phosphoglycerate. This chain is 2,3-bisphosphoglycerate-dependent phosphoglycerate mutase, found in Polaromonas naphthalenivorans (strain CJ2).